Here is a 481-residue protein sequence, read N- to C-terminus: Zinc metalloproteinase/disintegrin (481 aa).

Positions 1–20 are cleaved as a signal peptide; sequence MIQVLLVTICLAVFPYQGSS. Positions 21-190 are excised as a propeptide; it reads IILESGNVDD…KASQLYLTPE (170 aa). The Peptidase M12B domain maps to 197–392; it reads RYIKLAIVVD…DNPQCILNAP (196 aa). Cystine bridges form between Cys-308–Cys-387, Cys-349–Cys-371, and Cys-351–Cys-354. Zn(2+) is bound at residue His-333. The active site involves Glu-334. Positions 337 and 343 each coordinate Zn(2+). Residues 393–408 constitute a propeptide that is removed on maturation; the sequence is LRTDTVSTPVSGNEFL. Positions 400–481 constitute a Disintegrin domain; it reads TPVSGNEFLE…ADCPRNGLYS (82 aa). Intrachain disulfides connect Cys-414–Cys-429, Cys-416–Cys-424, Cys-423–Cys-446, Cys-437–Cys-443, Cys-442–Cys-467, and Cys-455–Cys-474. The Cell attachment site signature appears at 459–461; it reads RGD.

This sequence belongs to the venom metalloproteinase (M12B) family. P-II subfamily. P-IIa sub-subfamily. Monomer. It depends on Zn(2+) as a cofactor. Expressed by the venom gland.

The protein resides in the secreted. Impairs hemostasis in the envenomed animal. Functionally, inhibits platelet aggregation induced by ADP, thrombin, platelet-activating factor and collagen. Acts by inhibiting fibrinogen interaction with platelet receptors GPIIb/GPIIIa (ITGA2B/ITGB3). This is Zinc metalloproteinase/disintegrin from Protobothrops elegans (Elegant pitviper).